The following is an 893-amino-acid chain: Protein bride of sevenless (893 aa).

An N-terminal signal peptide occupies residues M1–H30. The Extracellular portion of the chain corresponds to V32 to T530. 2 disordered regions span residues T36 to S66 and G82 to T102. Positions Q50–S66 are enriched in polar residues. Residues N183, N307, N328, N471, and N482 are each glycosylated (N-linked (GlcNAc...) asparagine). The next 8 membrane-spanning stretches (helical) occupy residues G531–V551, P563–F583, L607–L627, A630–I650, I653–M673, W692–I712, G722–L742, and A752–P772. The Cytoplasmic segment spans residues R773–F893. The interval A858 to F893 is disordered.

This sequence belongs to the G-protein coupled receptor 3 family.

Its subcellular location is the cell membrane. Functionally, acts as a ligand for sevenless tyrosine-kinase receptor during eye development. This is Protein bride of sevenless (boss) from Drosophila virilis (Fruit fly).